The primary structure comprises 470 residues: 6-phospho-beta-galactosidase 1 (470 aa).

D-galactose 6-phosphate contacts are provided by Q23, H120, N163, E164, and N300. The Proton donor role is filled by E164. E378 acts as the Nucleophile in catalysis. Residues S434, W435, K441, and Y443 each contribute to the D-galactose 6-phosphate site.

It belongs to the glycosyl hydrolase 1 family.

The catalysed reaction is a 6-phospho-beta-D-galactoside + H2O = D-galactose 6-phosphate + an alcohol. It participates in carbohydrate metabolism; lactose degradation; D-galactose 6-phosphate and beta-D-glucose from lactose 6-phosphate: step 1/1. In Streptococcus pneumoniae (strain ATCC BAA-255 / R6), this protein is 6-phospho-beta-galactosidase 1.